A 542-amino-acid chain; its full sequence is MAGATSSIIRENDFEDELAESMQSYNRETADKLALTRTESVKPEPEITAPPHSRFSRSFKTVLIAQCAFTGFFSTIAGAIYYPVLSVIERKFDIDEELVNVTVVVYFVFQGLAPTFMGGFADSLGRRPVVLVAIVIYFGACIGLACAQTYAQIIVLRCLQAAGISPVIAINSGIMGDVTTRAERGGYVGYVAGFQVLGSAFGALIGAGLSSRWGWRAIFWFLAIGSGICFLASFLILPETKRNISGNGSVTPKSYLNRAPILVLPTVRKSLHLDNPDYETLELPTQLNLLAPFKILKAYEICILMLVAGLQFAMYTTHLTALSTALSKQYHLTVAKVGLCYLPSGICTLCSIVIAGRYLNWNYRRRLKYYQNWLGKKRSKLLEEHDNDLNLVQRIIENDPKYTFNIFKARLQPAFVTLLLSSSGFCAYGWCITVKAPLAAVLCMSGFASLFSNCILTFSTTLIVDLFPTKTSTATGCLNLFRCILSAVFIAALSKMVEKMKFGGVFTFLGALTSSSSILLFILLRKGKELAFKRKKQELGVN.

Residues 1–67 (MAGATSSIIR…SFKTVLIAQC (67 aa)) are Cytoplasmic-facing. The residue at position 21 (S21) is a Phosphoserine. T38 bears the Phosphothreonine mark. The residue at position 40 (S40) is a Phosphoserine. The helical transmembrane segment at 68-88 (AFTGFFSTIAGAIYYPVLSVI) threads the bilayer. At 89-100 (ERKFDIDEELVN) the chain is on the extracellular side. A helical transmembrane segment spans residues 101–121 (VTVVVYFVFQGLAPTFMGGFA). Over 122-127 (DSLGRR) the chain is Cytoplasmic. Residues 128 to 148 (PVVLVAIVIYFGACIGLACAQ) form a helical membrane-spanning segment. A topological domain (extracellular) is located at residue T149. Residues 150 to 170 (YAQIIVLRCLQAAGISPVIAI) form a helical membrane-spanning segment. Residues 171–187 (NSGIMGDVTTRAERGGY) are Cytoplasmic-facing. Residues 188-208 (VGYVAGFQVLGSAFGALIGAG) form a helical membrane-spanning segment. The Extracellular segment spans residues 209 to 216 (LSSRWGWR). A helical transmembrane segment spans residues 217 to 237 (AIFWFLAIGSGICFLASFLIL). The Cytoplasmic segment spans residues 238–300 (PETKRNISGN…APFKILKAYE (63 aa)). The chain crosses the membrane as a helical span at residues 301 to 321 (ICILMLVAGLQFAMYTTHLTA). Topologically, residues 322 to 333 (LSTALSKQYHLT) are extracellular. Residues 334 to 354 (VAKVGLCYLPSGICTLCSIVI) traverse the membrane as a helical segment. Topologically, residues 355 to 413 (AGRYLNWNYRRRLKYYQNWLGKKRSKLLEEHDNDLNLVQRIIENDPKYTFNIFKARLQP) are cytoplasmic. A helical transmembrane segment spans residues 414–434 (AFVTLLLSSSGFCAYGWCITV). The Extracellular portion of the chain corresponds to 435-437 (KAP). Residues 438-458 (LAAVLCMSGFASLFSNCILTF) traverse the membrane as a helical segment. Residues 459–472 (STTLIVDLFPTKTS) are Cytoplasmic-facing. Residues 473 to 493 (TATGCLNLFRCILSAVFIAAL) traverse the membrane as a helical segment. Residues 494–503 (SKMVEKMKFG) are Extracellular-facing. The helical transmembrane segment at 504 to 524 (GVFTFLGALTSSSSILLFILL) threads the bilayer. The Cytoplasmic segment spans residues 525–542 (RKGKELAFKRKKQELGVN).

It belongs to the major facilitator superfamily. CAR1 family.

Its subcellular location is the cell membrane. In terms of biological role, multidrug resistance transporter involved in resistance and adaptation to quinidine and to the herbicide barban (4-chloro-2-butynyl [3-chlorophenyl] carbamate). Implicated in potassium uptake. This chain is Quinidine resistance protein 2 (QDR2), found in Saccharomyces cerevisiae (strain ATCC 204508 / S288c) (Baker's yeast).